We begin with the raw amino-acid sequence, 761 residues long: 5-methyltetrahydropteroyltriglutamate--homocysteine methyltransferase (761 aa).

5-methyltetrahydropteroyltri-L-glutamate is bound by residues 16-19 and lysine 116; that span reads RELK. L-homocysteine contacts are provided by residues 435 to 437 and glutamate 488; that span reads IGS. L-methionine is bound by residues 435–437 and glutamate 488; that span reads IGS. 5-methyltetrahydropteroyltri-L-glutamate-binding positions include 519 to 520 and tryptophan 565; that span reads RC. Aspartate 603 provides a ligand contact to L-homocysteine. Aspartate 603 is an L-methionine binding site. Residue glutamate 609 participates in 5-methyltetrahydropteroyltri-L-glutamate binding. Zn(2+) is bound by residues histidine 645, cysteine 647, and glutamate 669. Histidine 698 acts as the Proton donor in catalysis. A Zn(2+)-binding site is contributed by cysteine 730.

Belongs to the vitamin-B12 independent methionine synthase family. Zn(2+) serves as cofactor.

The enzyme catalyses 5-methyltetrahydropteroyltri-L-glutamate + L-homocysteine = tetrahydropteroyltri-L-glutamate + L-methionine. The protein operates within amino-acid biosynthesis; L-methionine biosynthesis via de novo pathway; L-methionine from L-homocysteine (MetE route): step 1/1. Catalyzes the transfer of a methyl group from 5-methyltetrahydrofolate to homocysteine resulting in methionine formation. In Hahella chejuensis (strain KCTC 2396), this protein is 5-methyltetrahydropteroyltriglutamate--homocysteine methyltransferase.